Reading from the N-terminus, the 113-residue chain is Major basic nuclear protein 1 (113 aa).

Residues 1–20 (MAPKMKAAMKAMKAPAMKGK) form a disordered region.

The protein resides in the nucleus. The sequence is that of Major basic nuclear protein 1 (HCc1) from Crypthecodinium cohnii (Dinoflagellate).